Here is a 128-residue protein sequence, read N- to C-terminus: Transcription antitermination protein NusB (128 aa).

This sequence belongs to the NusB family.

In terms of biological role, involved in transcription antitermination. Required for transcription of ribosomal RNA (rRNA) genes. Binds specifically to the boxA antiterminator sequence of the ribosomal RNA (rrn) operons. The protein is Transcription antitermination protein NusB of Exiguobacterium sp. (strain ATCC BAA-1283 / AT1b).